The primary structure comprises 66 residues: Large ribosomal subunit protein bL33c (66 aa).

Belongs to the bacterial ribosomal protein bL33 family.

It localises to the plastid. Its subcellular location is the chloroplast. The protein is Large ribosomal subunit protein bL33c of Lotus japonicus (Lotus corniculatus var. japonicus).